A 1830-amino-acid polypeptide reads, in one-letter code: Urea amidolyase (1830 aa).

ATP is bound by residues 115-122 (GAIVIGKT), Lys740, Glu823, and Asn858. The 444-residue stretch at 625–1068 (PFETVLIANR…ATKILDSYDY (444 aa)) folds into the Biotin carboxylation domain. Positions 744–941 (REIAEKAGVP…LVEWMLRIAA (198 aa)) constitute an ATP-grasp domain. Residues 1752–1830 (AVEEEYPEDA…DAGDLVAVIQ (79 aa)) enclose the Biotinyl-binding domain. An N6-biotinyllysine modification is found at Lys1796.

This sequence belongs to the DUR1,2 family. Monomer. The cofactor is biotin.

The enzyme catalyses urea + hydrogencarbonate + ATP = urea-1-carboxylate + ADP + phosphate + H(+). It carries out the reaction urea-1-carboxylate + H2O + 3 H(+) = 2 NH4(+) + 2 CO2. It functions in the pathway nitrogen metabolism; urea degradation; CO(2) and NH(3) from urea (allophanate route): step 1/2. Its pathway is nitrogen metabolism; urea degradation; CO(2) and NH(3) from urea (allophanate route): step 2/2. Functionally, involved in uracil catabolism. Hydrolysis of urea to ammonia and CO(2). The polypeptide is Urea amidolyase (DUR1,2) (Lachancea kluyveri (Yeast)).